Consider the following 569-residue polypeptide: Peroxynitrite isomerase THAP4 (569 aa).

Residues 1 to 85 (MVICCAAVNC…LKPTAVPSIF (85 aa)) form a THAP-type zinc finger. Residues 88-216 (SEKKRGAGGH…DKSGISMDDF (129 aa)) form a disordered region. Polar residues-rich tracts occupy residues 121 to 130 (IGSSLSSSDN) and 157 to 167 (AVSQEQGQSLE). At S159 the chain carries Phosphoserine. The HCFC1-binding motif (HBM) motif lies at 230–233 (LHSY). Phosphoserine is present on S234. The disordered stretch occupies residues 235-312 (FSSKHTRERP…EAVQSEHSDA (78 aa)). The span at 242-262 (ERPSVPREPMDRKRLKREMEP) shows a compositional bias: basic and acidic residues. Residues 265 to 279 (SGNSVAQSPPSSSLT) are compositionally biased toward polar residues. Residues 280–289 (ATPQKASQSP) are compositionally biased toward low complexity. The tract at residues 407 to 569 (PPKLNPVVEP…LHITYKKVTP (163 aa)) is nitrobindin. Residues T436 and H559 each contribute to the heme b site.

The protein in the C-terminal section; belongs to the nitrobindin family. Homodimer. Heme b serves as cofactor.

Its subcellular location is the cytoplasm. It is found in the nucleus. It carries out the reaction peroxynitrite = nitrate. Its pathway is nitrogen metabolism. Heme-binding protein able to scavenge peroxynitrite and to protect free L-tyrosine against peroxynitrite-mediated nitration, by acting as a peroxynitrite isomerase that converts peroxynitrite to nitrate. Therefore, this protein likely plays a role in peroxynitrite sensing and in the detoxification of reactive nitrogen and oxygen species (RNS and ROS, respectively). Is able to bind nitric oxide (NO) in vitro, but may act as a sensor of peroxynitrite levels in vivo, possibly modulating the transcriptional activity residing in the N-terminal region. The protein is Peroxynitrite isomerase THAP4 of Mus musculus (Mouse).